The sequence spans 67 residues: DNA-directed RNA polymerases I, II, and III subunit RPABC5 (67 aa).

4 residues coordinate Zn(2+): cysteine 7, cysteine 10, cysteine 44, and cysteine 45.

The protein belongs to the archaeal Rpo10/eukaryotic RPB10 RNA polymerase subunit family. In terms of assembly, component of the RNA polymerase I (Pol I), RNA polymerase II (Pol II) and RNA polymerase III (Pol III) complexes consisting of at least 13, 12 and 17 subunits, respectively.

It localises to the nucleus. Its function is as follows. DNA-dependent RNA polymerase catalyzes the transcription of DNA into RNA using the four ribonucleoside triphosphates as substrates. Common component of RNA polymerases I, II and III which synthesize ribosomal RNA precursors, mRNA precursors and many functional non-coding RNAs, and a small RNAs, such as 5S rRNA and tRNAs, respectively. Pol II is the central component of the basal RNA polymerase II transcription machinery. Pols are composed of mobile elements that move relative to each other. In Pol II, RBP10 is part of the core element with the central large cleft. The protein is DNA-directed RNA polymerases I, II, and III subunit RPABC5 of Caenorhabditis briggsae.